The following is a 515-amino-acid chain: Histidine ammonia-lyase (515 aa).

Positions 146-148 (ASG) form a cross-link, 5-imidazolinone (Ala-Gly). Ser147 is subject to 2,3-didehydroalanine (Ser).

It belongs to the PAL/histidase family. In terms of processing, contains an active site 4-methylidene-imidazol-5-one (MIO), which is formed autocatalytically by cyclization and dehydration of residues Ala-Ser-Gly.

It localises to the cytoplasm. The catalysed reaction is L-histidine = trans-urocanate + NH4(+). Its pathway is amino-acid degradation; L-histidine degradation into L-glutamate; N-formimidoyl-L-glutamate from L-histidine: step 1/3. The chain is Histidine ammonia-lyase (hutH) from Ralstonia nicotianae (strain ATCC BAA-1114 / GMI1000) (Ralstonia solanacearum).